The following is an 816-amino-acid chain: Nitrogen permease regulator 3 (816 aa).

The N-terminal stretch at 1-23 (MSSIARPPDPCLVAVVLIARSRA) is a signal peptide. Disordered regions lie at residues 26 to 166 (RFVF…VPWE), 213 to 249 (WRKQ…GNDA), 262 to 287 (ALHP…PLDA), and 632 to 684 (SKGK…NRFR). The span at 44–56 (PKARRTSRSRSRQ) shows a compositional bias: basic residues. Residues 82–95 (SQNLNNSNNSNNNS) are compositionally biased toward low complexity. Over residues 101–127 (RRSSNFGLDDSNTLSENQRPGSISSSR) the composition is skewed to polar residues. Over residues 148–159 (DRQEDGSRESDG) the composition is skewed to basic and acidic residues. Positions 214–224 (RKQRRKKKKKQ) are enriched in basic residues. Residues 225 to 238 (RAEWESGELGHNDA) are compositionally biased toward basic and acidic residues. Polar residues predominate over residues 268-282 (QRPSVPNSRSSQMSS). Residues 641-654 (SDKEDSVNDERTEG) show a composition bias toward basic and acidic residues. Residues 660–676 (ASSSSSSSLASHGSGDA) show a composition bias toward low complexity.

The protein belongs to the NPR3 family.

Functionally, mediates inactivation of the TORC1 complex in response to amino acid starvation. Required for meiotic nuclear division. This Emericella nidulans (strain FGSC A4 / ATCC 38163 / CBS 112.46 / NRRL 194 / M139) (Aspergillus nidulans) protein is Nitrogen permease regulator 3 (npr3).